The chain runs to 593 residues: UvrABC system protein C (593 aa).

Positions 17–94 (MEPGCYLMKD…IKQYQPRYNI (78 aa)) constitute a GIY-YIG domain. In terms of domain architecture, UVR spans 199–234 (KTILKSLEERMLTASESLDFERAKEYRDLIQHIQNL).

The protein belongs to the UvrC family. In terms of assembly, interacts with UvrB in an incision complex.

The protein localises to the cytoplasm. Functionally, the UvrABC repair system catalyzes the recognition and processing of DNA lesions. UvrC both incises the 5' and 3' sides of the lesion. The N-terminal half is responsible for the 3' incision and the C-terminal half is responsible for the 5' incision. The protein is UvrABC system protein C of Staphylococcus aureus (strain MRSA252).